A 98-amino-acid chain; its full sequence is Small ribosomal subunit protein bS20 (98 aa).

The protein belongs to the bacterial ribosomal protein bS20 family.

Functionally, binds directly to 16S ribosomal RNA. The polypeptide is Small ribosomal subunit protein bS20 (Prochlorococcus marinus (strain NATL1A)).